Here is an 82-residue protein sequence, read N- to C-terminus: MVTIRLTRGGAKKRPFYQIVVADSRSPRDGRFIERIGFFNPLAAGQAERLRLDVAKVDAWVAKGAALSERVATLVKEARKAA.

The protein belongs to the bacterial ribosomal protein bS16 family.

The protein is Small ribosomal subunit protein bS16 of Haemophilus ducreyi (strain 35000HP / ATCC 700724).